Here is a 220-residue protein sequence, read N- to C-terminus: Small ribosomal subunit protein uS3 (220 aa).

The 69-residue stretch at 38–106 folds into the KH type-2 domain; the sequence is IRNFINKKLQ…QVHINIVEIK (69 aa).

This sequence belongs to the universal ribosomal protein uS3 family. Part of the 30S ribosomal subunit. Forms a tight complex with proteins S10 and S14.

Functionally, binds the lower part of the 30S subunit head. Binds mRNA in the 70S ribosome, positioning it for translation. The chain is Small ribosomal subunit protein uS3 from Lacticaseibacillus paracasei (strain ATCC 334 / BCRC 17002 / CCUG 31169 / CIP 107868 / KCTC 3260 / NRRL B-441) (Lactobacillus paracasei).